Reading from the N-terminus, the 297-residue chain is 4-hydroxy-tetrahydrodipicolinate synthase (297 aa).

Residue Thr55 coordinates pyruvate. Tyr144 serves as the catalytic Proton donor/acceptor. The active-site Schiff-base intermediate with substrate is the Lys172. A pyruvate-binding site is contributed by Ile213.

Belongs to the DapA family. Homotetramer; dimer of dimers.

The protein localises to the cytoplasm. The catalysed reaction is L-aspartate 4-semialdehyde + pyruvate = (2S,4S)-4-hydroxy-2,3,4,5-tetrahydrodipicolinate + H2O + H(+). Its pathway is amino-acid biosynthesis; L-lysine biosynthesis via DAP pathway; (S)-tetrahydrodipicolinate from L-aspartate: step 3/4. Catalyzes the condensation of (S)-aspartate-beta-semialdehyde [(S)-ASA] and pyruvate to 4-hydroxy-tetrahydrodipicolinate (HTPA). In Lactococcus lactis subsp. cremoris (strain SK11), this protein is 4-hydroxy-tetrahydrodipicolinate synthase.